Consider the following 299-residue polypeptide: Aspartate carbamoyltransferase catalytic subunit (299 aa).

The carbamoyl phosphate site is built by Arg-51 and Thr-52. Lys-79 lines the L-aspartate pocket. Residues Arg-101, His-130, and Gln-133 each coordinate carbamoyl phosphate. The L-aspartate site is built by Arg-163 and Arg-215. Positions 256 and 257 each coordinate carbamoyl phosphate.

This sequence belongs to the aspartate/ornithine carbamoyltransferase superfamily. ATCase family. In terms of assembly, heterododecamer (2C3:3R2) of six catalytic PyrB chains organized as two trimers (C3), and six regulatory PyrI chains organized as three dimers (R2).

The catalysed reaction is carbamoyl phosphate + L-aspartate = N-carbamoyl-L-aspartate + phosphate + H(+). The protein operates within pyrimidine metabolism; UMP biosynthesis via de novo pathway; (S)-dihydroorotate from bicarbonate: step 2/3. Catalyzes the condensation of carbamoyl phosphate and aspartate to form carbamoyl aspartate and inorganic phosphate, the committed step in the de novo pyrimidine nucleotide biosynthesis pathway. The chain is Aspartate carbamoyltransferase catalytic subunit from Ehrlichia chaffeensis (strain ATCC CRL-10679 / Arkansas).